Reading from the N-terminus, the 242-residue chain is Neuromodulin (242 aa).

Residues 1–242 are disordered; it reads MLCCMRRTKQ…EEREADQEHA (242 aa). S-palmitoyl cysteine attachment occurs at residues cysteine 3 and cysteine 4. The segment covering 9 to 32 has biased composition (basic and acidic residues); sequence KQVEKNDEDQKIEQDGIKPEDKAH. Positions 31-60 constitute an IQ domain; sequence AHKAATKIQASFRGHITRKKLKGEKKGDAP. Phosphoserine; by PHK and PKC is present on serine 41. The segment covering 66-84 has biased composition (basic and acidic residues); sequence ANEKDEAAVAEGTEKKEGE. Positions 85 to 97 are enriched in low complexity; that stretch reads GSTPAEAAPGAGP. Phosphoserine is present on serine 86. Residues 98-118 show a composition bias toward basic and acidic residues; it reads KPEEKTGKAGETPSEEKKGEG. Positions 119 to 134 are enriched in low complexity; the sequence is APDAATEQAAPQAPAP. Residues 143 to 158 are compositionally biased toward polar residues; it reads ETESATKASTDNSPSS. Phosphoserine occurs at positions 155, 157, and 158. The segment covering 159-171 has biased composition (basic and acidic residues); the sequence is KAEDAPAKEEPKQ. The segment covering 172 to 204 has biased composition (low complexity); the sequence is ADVPAAVTAAAATAPAAEDAAAMATAQPPTETA. Phosphoserine; by CK2 occurs at positions 206 and 207. The segment covering 209-242 has biased composition (basic and acidic residues); the sequence is AEEKIEAVDETKPKDSARQDEGKGEEREADQEHA.

This sequence belongs to the neuromodulin family. Identified in a complex containing FGFR4, NCAM1, CDH2, PLCG1, FRS2, SRC, SHC1, GAP43 and CTTN. Interacts (via IQ domain) with calmodulin. Binds calmodulin with a greater affinity in the absence of Ca(2+) than in its presence. In terms of processing, phosphorylated. Phosphorylation of this protein by a protein kinase C is specifically correlated with certain forms of synaptic plasticity. Palmitoylated by ZDHHC3. Palmitoylation is regulated by ARF6 and is essential for plasma membrane association and axonal and dendritic filopodia induction. Deacylated by LYPLA2.

The protein localises to the cell membrane. It localises to the cell projection. Its subcellular location is the growth cone membrane. The protein resides in the synapse. It is found in the filopodium membrane. The protein localises to the perikaryon. It localises to the dendrite. Its subcellular location is the axon. The protein resides in the cytoplasm. Functionally, this protein is associated with nerve growth. It is a major component of the motile 'growth cones' that form the tips of elongating axons. Plays a role in axonal and dendritic filopodia induction. This chain is Neuromodulin (GAP43), found in Bos taurus (Bovine).